The sequence spans 941 residues: ATP-dependent 6-phosphofructokinase subunit beta (941 aa).

The tract at residues 2 to 558 (PDASLFNGTS…HMKNFISTNS (557 aa)) is N-terminal catalytic PFK domain 1. ATP contacts are provided by residues glycine 191, 255–256 (RC), and 285–288 (GDGS). Residue aspartate 286 coordinates Mg(2+). Beta-D-fructose 6-phosphate contacts are provided by residues 331–333 (SID), arginine 368, and 375–377 (MGR). Catalysis depends on aspartate 333, which acts as the Proton acceptor. Residues isoleucine 395, 400 to 405 (KPASSR), and glutamine 410 contribute to the ATP site. Residues glutamate 432, arginine 460, and 466–469 (HVQR) contribute to the beta-D-fructose 6-phosphate site. 557 to 558 (NS) contacts ATP. Positions 559-572 (ADHVPPSLPLEKRK) are interdomain linker. Residues 573–941 (KIAIINVGAP…SDMLSGRTSL (369 aa)) are C-terminal regulatory PFK domain 2. Residues arginine 643, 701–705 (TISNN), arginine 739, 746–748 (QGG), glutamate 806, lysine 832, 838–841 (HVQQ), and arginine 918 contribute to the beta-D-fructose 2,6-bisphosphate site.

It belongs to the phosphofructokinase type A (PFKA) family. ATP-dependent PFK group I subfamily. Eukaryotic two domain clade 'E' sub-subfamily. In terms of assembly, heterododecamer of 4 alpha, 4 beta and 4 gamma chains. Mg(2+) serves as cofactor.

It localises to the cytoplasm. The catalysed reaction is beta-D-fructose 6-phosphate + ATP = beta-D-fructose 1,6-bisphosphate + ADP + H(+). The protein operates within carbohydrate degradation; glycolysis; D-glyceraldehyde 3-phosphate and glycerone phosphate from D-glucose: step 3/4. Allosterically activated by ADP, AMP, or fructose 2,6-bisphosphate, and allosterically inhibited by ATP or citrate. Its function is as follows. Catalyzes the phosphorylation of D-fructose 6-phosphate to fructose 1,6-bisphosphate by ATP, the first committing step of glycolysis. The protein is ATP-dependent 6-phosphofructokinase subunit beta (PFK2) of Komagataella pastoris (Yeast).